Consider the following 325-residue polypeptide: Collagen alpha-1(IX) chain (325 aa).

A compositionally biased stretch (low complexity) spans 1 to 54 (PGQLGNSGKPGQQGPPGEVGPRGPRGLPGSRGPVGPEGSPGIPGKLGPLGSPGL). Disordered regions lie at residues 1 to 163 (PGQL…APTD) and 187 to 325 (RPDT…GPDK). Positions 198-208 (RPGPPGPPGPP) are enriched in pro residues. Residues 237–249 (PKGDLGEKGERGP) show a composition bias toward basic and acidic residues. Pro residues predominate over residues 292-304 (VPGPPGPPGPPGF).

The protein belongs to the fibril-associated collagens with interrupted helices (FACIT) family. As to quaternary structure, heterotrimer of an alpha 1(IX), an alpha 2(IX) and an alpha 3(IX) chain. In terms of processing, covalently linked to the telopeptides of type II collagen by lysine-derived cross-links. Post-translationally, prolines at the third position of the tripeptide repeating unit (G-X-Y) are hydroxylated in some or all of the chains.

It is found in the secreted. The protein resides in the extracellular space. The protein localises to the extracellular matrix. Structural component of hyaline cartilage and vitreous of the eye. This Rattus norvegicus (Rat) protein is Collagen alpha-1(IX) chain (Col9a1).